The primary structure comprises 162 residues: uncharacterized protein (162 aa).

Residues 78-154 form the PUA domain; the sequence is KNLVVVDIGA…KAIKNLHYVG (77 aa).

This is an uncharacterized protein from Methanocaldococcus jannaschii (strain ATCC 43067 / DSM 2661 / JAL-1 / JCM 10045 / NBRC 100440) (Methanococcus jannaschii).